Consider the following 449-residue polypeptide: MKKFRARYAPSPTGHLHIGNARTALFNYLFARHHGGDFIIRIEDTDVARNVEGGITSQLNNLKWLGMDWDEGVDVGGSFGPYNQLSRLELYKKYAFELLEKGYAYKDFKEGSEDFAIRFKVPENVLYEFDDVIRGTLKFESKDVEDWIILKDNGIPTYNFAVVIDDHYMEITHVFRGEEHITNTPKQLMVYDALGWEYPTFGHMTIIVNEDRKKLSKRDTNTIQFIEDYKNLGFLPEAMLNFLSLLGWSPKDDEEILSKEELISLFDEHRLSAAPSYFDKQKLAYINSRYLKALSMDELKDLTRPFLINHGIEIKNEAWLESLLSILKDRLSYGAEITKYYDQFFHHDFVLEPAVLEEIKEFDNEVVIKGFMGAISSVDFTDDVAINQALKDTGKALNIKGKPLFMPIRIATTGEAHGPSLPVSLSLLGKELVIKRMNKTLEVLKGETK.

Residues 10–20 (PSPTGHLHIGN) carry the 'HIGH' region motif. The 'KMSKS' region signature appears at 214–218 (KLSKR). An ATP-binding site is contributed by Lys217.

This sequence belongs to the class-I aminoacyl-tRNA synthetase family. Glutamate--tRNA ligase type 1 subfamily. In terms of assembly, monomer.

Its subcellular location is the cytoplasm. It catalyses the reaction tRNA(Glu) + L-glutamate + ATP = L-glutamyl-tRNA(Glu) + AMP + diphosphate. Catalyzes the attachment of glutamate to tRNA(Glu) in a two-step reaction: glutamate is first activated by ATP to form Glu-AMP and then transferred to the acceptor end of tRNA(Glu). This is Glutamate--tRNA ligase from Acholeplasma laidlawii (strain PG-8A).